We begin with the raw amino-acid sequence, 380 residues long: F-box/kelch-repeat protein At3g18720 (380 aa).

The F-box domain occupies 47–94 (LWDKQIPTDLLQEILSRLGLKANIHASLVCKTWLKEAVSVRKFQSRPW). Kelch repeat units lie at residues 190–233 (CVIS…INRC) and 234–279 (IFSN…LVRQ).

This is F-box/kelch-repeat protein At3g18720 from Arabidopsis thaliana (Mouse-ear cress).